The primary structure comprises 20 residues: Chrysophsin-3 (20 aa).

His20 is modified (histidine amide).

As to expression, gill.

It is found in the secreted. Functionally, has antibacterial activity against Gram-positive bacteria B.subtilis ATCC 6633, L.garvieae ATCC 49156 and S.iniae F-8502, and Gram-negative bacteria E.coli WT-2, V.anguillarum ATCC 19264, V.penaeicida KHA, V.harveyi ATCC 14126, V.vulnificus ATCC 33148, A.salmonicida NCMB 1102 and P.putida ATCC 12633. Has hemolytic activity against human red blood cells. Seems to disrupt the membranes by adopting an alpha helical conformation. May play a significant role in innate host defense. This Pagrus major (Red sea bream) protein is Chrysophsin-3.